The following is a 242-amino-acid chain: uncharacterized protein (242 aa).

The HTH gntR-type domain occupies 8-76 (TPLYIQLKQI…QGKGTFVKSP (69 aa)). The segment at residues 36–55 (ENELCTKYNVSRITVRKAIL) is a DNA-binding region (H-T-H motif).

This is an uncharacterized protein from Bacillus subtilis (strain 168).